Reading from the N-terminus, the 444-residue chain is Deoxyguanosinetriphosphate triphosphohydrolase-like protein (444 aa).

The disordered stretch occupies residues 1–26 (MTESLWHERRLTEEKKRRNDHRSPYQ). The HD domain maps to 59–250 (RLTHSLEVSQ…MELADDIAYA (192 aa)).

The protein belongs to the dGTPase family. Type 2 subfamily.

This is Deoxyguanosinetriphosphate triphosphohydrolase-like protein from Shewanella sediminis (strain HAW-EB3).